The following is a 171-amino-acid chain: Small ribosomal subunit protein uS13 (171 aa).

Polar residues predominate over residues 1–11; it reads MAKGSANNVKV. 2 disordered regions span residues 1–24 and 144–164; these read MAKGSANNVKVNQDAGKSQPEKKE and EKGKKVRGQRTRSNGRKGLSI. Over residues 144–158 the composition is skewed to basic residues; sequence EKGKKVRGQRTRSNG.

It belongs to the universal ribosomal protein uS13 family. As to quaternary structure, part of the 30S ribosomal subunit. Forms a loose heterodimer with protein S19. Forms two bridges to the 50S subunit in the 70S ribosome.

Functionally, located at the top of the head of the 30S subunit, it contacts several helices of the 16S rRNA. In the 70S ribosome it contacts the 23S rRNA (bridge B1a) and protein L5 of the 50S subunit (bridge B1b), connecting the 2 subunits; these bridges are implicated in subunit movement. In Thermoplasma acidophilum (strain ATCC 25905 / DSM 1728 / JCM 9062 / NBRC 15155 / AMRC-C165), this protein is Small ribosomal subunit protein uS13.